A 1377-amino-acid polypeptide reads, in one-letter code: DNA-directed RNA polymerase subunit beta'' (1377 aa).

The Zn(2+) site is built by C220, C291, C298, and C301.

Belongs to the RNA polymerase beta' chain family. RpoC2 subfamily. In plastids the minimal PEP RNA polymerase catalytic core is composed of four subunits: alpha, beta, beta', and beta''. When a (nuclear-encoded) sigma factor is associated with the core the holoenzyme is formed, which can initiate transcription. Requires Zn(2+) as cofactor.

Its subcellular location is the plastid. It is found in the chloroplast. The catalysed reaction is RNA(n) + a ribonucleoside 5'-triphosphate = RNA(n+1) + diphosphate. Functionally, DNA-dependent RNA polymerase catalyzes the transcription of DNA into RNA using the four ribonucleoside triphosphates as substrates. This Nandina domestica (Heavenly bamboo) protein is DNA-directed RNA polymerase subunit beta''.